The primary structure comprises 453 residues: Transmembrane protease serine 3 (453 aa).

Over 1–48 (MGENDPPAAEAPFSFRSLFGLDDLKISPVAPDGDAVAAQILSLLPLKF) the chain is Cytoplasmic. Residues 49–69 (FPIIVIGIIALILALAIGLGI) form a helical; Signal-anchor for type II membrane protein membrane-spanning segment. At 70–453 (HFDCSGKYRC…HEQLERDLKT (384 aa)) the chain is on the extracellular side. Residues 72–108 (DCSGKYRCHSSFKCIELTARCDGVSDCKNAEDEYRCV) enclose the LDL-receptor class A domain. 10 disulfides stabilise this stretch: Cys-73–Cys-85, Cys-79–Cys-98, Cys-92–Cys-107, Cys-129–Cys-194, Cys-142–Cys-204, Cys-207–Cys-324, Cys-242–Cys-258, Cys-338–Cys-406, Cys-369–Cys-385, and Cys-396–Cys-424. In terms of domain architecture, SRCR spans 104-205 (EYRCVRVSGQ…SGHVVTLKCS (102 aa)). The 232-residue stretch at 217 to 448 (IVGGNMSSLT…FLDWIHEQLE (232 aa)) folds into the Peptidase S1 domain. The N-linked (GlcNAc...) asparagine glycan is linked to Asn-221. Catalysis depends on charge relay system residues His-257 and Asp-304. Residue Ser-400 is the Charge relay system of the active site.

The protein belongs to the peptidase S1 family. Undergoes autoproteolytic activation. In terms of tissue distribution, strongly expressed in liver, cochlea, brain, cerebellum, spleen, lung, and muscle and at a lower degree in retina, kidney, and heart. Expressed in the spiral ganglion, the cells supporting the organ of Corti and the stria vascularis. Isoform 2 is strongly expressed only in the cochlea with very faint expression in the cerebellum, spleen and muscle.

The protein localises to the endoplasmic reticulum membrane. Functionally, probable serine protease that plays a role in hearing. Acts as a permissive factor for cochlear hair cell survival and activation at the onset of hearing and is required for saccular hair cell survival. Activates ENaC (in vitro). This is Transmembrane protease serine 3 (Tmprss3) from Mus musculus (Mouse).